A 113-amino-acid polypeptide reads, in one-letter code: Hydrogenase maturation factor HypA (113 aa).

His2 provides a ligand contact to Ni(2+). 4 residues coordinate Zn(2+): Cys73, Cys76, Cys89, and Cys92.

This sequence belongs to the HypA/HybF family.

In terms of biological role, involved in the maturation of [NiFe] hydrogenases. Required for nickel insertion into the metal center of the hydrogenase. The sequence is that of Hydrogenase maturation factor HypA from Beijerinckia indica subsp. indica (strain ATCC 9039 / DSM 1715 / NCIMB 8712).